We begin with the raw amino-acid sequence, 229 residues long: Large ribosomal subunit protein uL1c (229 aa).

It belongs to the universal ribosomal protein uL1 family. Part of the 50S ribosomal subunit.

The protein localises to the plastid. Its subcellular location is the chloroplast. Binds directly to 23S rRNA. Might be involved in E site tRNA release (Potential). This Pyropia yezoensis (Susabi-nori) protein is Large ribosomal subunit protein uL1c (rpl1).